A 299-amino-acid polypeptide reads, in one-letter code: Nicotinate-nucleotide pyrophosphorylase [carboxylating] (299 aa).

The interval 8–12 (FLLPP) is important for hexamer formation. Residues R102, 138–139 (RK), 160–161 (HR), K171, E201, D222, 248–250 (SGG), and G270 contribute to the quinolinate site.

This sequence belongs to the NadC/ModD family. Hexamer formed by 3 homodimers.

It catalyses the reaction nicotinate beta-D-ribonucleotide + CO2 + diphosphate = quinolinate + 5-phospho-alpha-D-ribose 1-diphosphate + 2 H(+). Its pathway is cofactor biosynthesis; NAD(+) biosynthesis; nicotinate D-ribonucleotide from quinolinate: step 1/1. Functionally, involved in the catabolism of quinolinic acid (QA). This is Nicotinate-nucleotide pyrophosphorylase [carboxylating] (Qprt) from Rattus norvegicus (Rat).